Here is a 98-residue protein sequence, read N- to C-terminus: NADH-ubiquinone oxidoreductase chain 4L (98 aa).

3 consecutive transmembrane segments (helical) span residues 1 to 21 (MPII…GMLF), 29 to 49 (SLLC…LMAL), and 58 to 78 (IVPI…LALL).

It belongs to the complex I subunit 4L family. Core subunit of respiratory chain NADH dehydrogenase (Complex I) which is composed of 45 different subunits.

The protein resides in the mitochondrion inner membrane. The enzyme catalyses a ubiquinone + NADH + 5 H(+)(in) = a ubiquinol + NAD(+) + 4 H(+)(out). Functionally, core subunit of the mitochondrial membrane respiratory chain NADH dehydrogenase (Complex I) which catalyzes electron transfer from NADH through the respiratory chain, using ubiquinone as an electron acceptor. Part of the enzyme membrane arm which is embedded in the lipid bilayer and involved in proton translocation. The polypeptide is NADH-ubiquinone oxidoreductase chain 4L (MT-ND4L) (Trachypithecus obscurus (Dusky leaf-monkey)).